We begin with the raw amino-acid sequence, 272 residues long: Alkaline ceramidase (272 aa).

2 helical membrane-spanning segments follow: residues 34–54 (FANTCTNLPIIVLPLVNIMLL) and 61–81 (VNGGLVFPQLLLTFNGLASTY). H83 contacts Zn(2+). A run of 4 helical transmembrane segments spans residues 96 to 116 (LSLVWIITVFLVVYIPVMKWF), 124 to 144 (LTVVRWVVLIVTAVVSALCFL), 148 to 168 (LNAIALMLFSIPAAVVIRYEG), and 183 to 203 (ILALWGVAFSFWFADRLLCDF). Zn(2+) is bound by residues H213 and H217. A helical membrane pass occupies residues 214 to 234 (ALFHLLAGLAGYTIFIMFSMI). N-linked (GlcNAc...) asparagine glycosylation occurs at N256.

Belongs to the alkaline ceramidase family. Requires Zn(2+) as cofactor.

It is found in the membrane. The enzyme catalyses an N-acylsphing-4-enine + H2O = sphing-4-enine + a fatty acid. Its function is as follows. Hydrolyzes the sphingolipid ceramide into sphingosine and free fatty acid. The sequence is that of Alkaline ceramidase from Caenorhabditis briggsae.